The following is a 244-amino-acid chain: Large ribosomal subunit protein uL30 (244 aa).

This sequence belongs to the universal ribosomal protein uL30 family.

This chain is Large ribosomal subunit protein uL30 (RPL7), found in Candida glabrata (strain ATCC 2001 / BCRC 20586 / JCM 3761 / NBRC 0622 / NRRL Y-65 / CBS 138) (Yeast).